We begin with the raw amino-acid sequence, 1463 residues long: Probable ATP-dependent RNA helicase spindle-E (1463 aa).

Residues 131-296 (LKAIRENPVV…FKIPGPNSLF (166 aa)) enclose the Helicase ATP-binding domain. Residue 144 to 151 (GMTGCGKT) coordinates ATP. The DEAH box signature appears at 243 to 246 (DEVH). Residues 348–531 (VCDRFIDEFE…NVVLKTKLLD (184 aa)) form the Helicase C-terminal domain. In terms of domain architecture, Tudor spans 951–1016 (AFKQRDIVAA…QLRGTPLDMF (66 aa)).

It belongs to the DEAD box helicase family. DEAH subfamily.

Its subcellular location is the cytoplasm. It carries out the reaction ATP + H2O = ADP + phosphate + H(+). Its function is as follows. Probable ATP-binding RNA helicase which plays a central role during gametogenesis by repressing transposable elements and preventing their mobilization, which is essential for the germline integrity. Acts via the piRNA metabolic process, which mediates the repression of transposable elements during meiosis by forming complexes composed of piRNAs and Piwi proteins and govern the methylation and subsequent repression of transposons. The sequence is that of Probable ATP-dependent RNA helicase spindle-E (spn-E) from Anopheles gambiae (African malaria mosquito).